A 97-amino-acid polypeptide reads, in one-letter code: Small ribosomal subunit protein bS6 (97 aa).

This sequence belongs to the bacterial ribosomal protein bS6 family.

Its function is as follows. Binds together with bS18 to 16S ribosomal RNA. This is Small ribosomal subunit protein bS6 from Syntrophomonas wolfei subsp. wolfei (strain DSM 2245B / Goettingen).